We begin with the raw amino-acid sequence, 105 residues long: Met repressor (105 aa).

This sequence belongs to the MetJ family. Homodimer.

The protein resides in the cytoplasm. Its function is as follows. This regulatory protein, when combined with SAM (S-adenosylmethionine) represses the expression of the methionine regulon and of enzymes involved in SAM synthesis. This is Met repressor from Vibrio vulnificus (strain CMCP6).